We begin with the raw amino-acid sequence, 513 residues long: GMP synthase [glutamine-hydrolyzing] (513 aa).

The region spanning 9-198 is the Glutamine amidotransferase type-1 domain; sequence LILVLDFGSQ…VRRVCNCTGE (190 aa). The active-site Nucleophile is cysteine 86. Residues histidine 172 and glutamate 174 contribute to the active site. The region spanning 199–388 is the GMPS ATP-PPase domain; it reads WTMENFIEIE…LGIPEHLVWR (190 aa). An ATP-binding site is contributed by 226–232; the sequence is SGGVDSS.

As to quaternary structure, homodimer.

The catalysed reaction is XMP + L-glutamine + ATP + H2O = GMP + L-glutamate + AMP + diphosphate + 2 H(+). It participates in purine metabolism; GMP biosynthesis; GMP from XMP (L-Gln route): step 1/1. In terms of biological role, catalyzes the synthesis of GMP from XMP. The chain is GMP synthase [glutamine-hydrolyzing] from Staphylococcus epidermidis (strain ATCC 35984 / DSM 28319 / BCRC 17069 / CCUG 31568 / BM 3577 / RP62A).